Consider the following 360-residue polypeptide: Phospho-N-acetylmuramoyl-pentapeptide-transferase (360 aa).

10 consecutive transmembrane segments (helical) span residues 27-47 (GAIATALFFVFFFGPNIIKSL), 72-92 (TPTMGGLMILSGLFVSTLLWA), 94-114 (LSNHYVWVVLWVMLGYGAIGF), 135-155 (LACEAGVALVACIAMMKLGTP), 167-187 (GYVVDLGLFFLIFGPFVIVAS), 199-219 (GLAIVPVMIAAGTFGIIAYLV), 236-256 (AGELAVVSGAVIGAGLGFLWF), 263-283 (IFMGDTGSLALGGLLGTIAVA), 289-309 (VLAIVGGLFALETLSVIVQVV), and 337-357 (QVVVRFWIIAFVLALVGLSTL).

Belongs to the glycosyltransferase 4 family. MraY subfamily. Requires Mg(2+) as cofactor.

The protein resides in the cell inner membrane. It carries out the reaction UDP-N-acetyl-alpha-D-muramoyl-L-alanyl-gamma-D-glutamyl-meso-2,6-diaminopimeloyl-D-alanyl-D-alanine + di-trans,octa-cis-undecaprenyl phosphate = di-trans,octa-cis-undecaprenyl diphospho-N-acetyl-alpha-D-muramoyl-L-alanyl-D-glutamyl-meso-2,6-diaminopimeloyl-D-alanyl-D-alanine + UMP. The protein operates within cell wall biogenesis; peptidoglycan biosynthesis. In terms of biological role, catalyzes the initial step of the lipid cycle reactions in the biosynthesis of the cell wall peptidoglycan: transfers peptidoglycan precursor phospho-MurNAc-pentapeptide from UDP-MurNAc-pentapeptide onto the lipid carrier undecaprenyl phosphate, yielding undecaprenyl-pyrophosphoryl-MurNAc-pentapeptide, known as lipid I. This chain is Phospho-N-acetylmuramoyl-pentapeptide-transferase, found in Beijerinckia indica subsp. indica (strain ATCC 9039 / DSM 1715 / NCIMB 8712).